A 547-amino-acid polypeptide reads, in one-letter code: Chaperonin GroEL (547 aa).

Residues 30-33 (TLGP), Lys-51, 87-91 (DGTTT), Gly-415, and Asp-495 each bind ATP. The tract at residues 526-547 (KKDTPVPPMPGGGMGGMGGMDF) is disordered. Residues 536-547 (GGGMGGMGGMDF) show a composition bias toward gly residues.

It belongs to the chaperonin (HSP60) family. Forms a cylinder of 14 subunits composed of two heptameric rings stacked back-to-back. Interacts with the co-chaperonin GroES.

The protein resides in the cytoplasm. It carries out the reaction ATP + H2O + a folded polypeptide = ADP + phosphate + an unfolded polypeptide.. In terms of biological role, together with its co-chaperonin GroES, plays an essential role in assisting protein folding. The GroEL-GroES system forms a nano-cage that allows encapsulation of the non-native substrate proteins and provides a physical environment optimized to promote and accelerate protein folding. The chain is Chaperonin GroEL from Bartonella henselae (strain ATCC 49882 / DSM 28221 / CCUG 30454 / Houston 1) (Rochalimaea henselae).